Consider the following 314-residue polypeptide: Deoxyhypusine hydroxylase (314 aa).

Methionine 1 bears the N-acetylmethionine mark. HEAT-like PBS-type repeat units lie at residues leucine 61–aspartate 87, valine 94–serine 120, glutamate 188–alanine 214, leucine 219–aspartate 245, and valine 252–aspartate 278. 4 residues coordinate Fe cation: histidine 63, glutamate 64, histidine 96, and glutamate 97. Fe cation is bound by residues histidine 221, glutamate 222, histidine 254, and glutamate 255.

Belongs to the deoxyhypusine hydroxylase family. Requires Fe(2+) as cofactor.

The catalysed reaction is [eIF5A protein]-deoxyhypusine + AH2 + O2 = [eIF5A protein]-hypusine + A + H2O. Its pathway is protein modification; eIF5A hypusination. Catalyzes the hydroxylation of the N(6)-(4-aminobutyl)-L-lysine intermediate to form hypusine, an essential post-translational modification only found in mature eIF-5A factor. This Arabidopsis thaliana (Mouse-ear cress) protein is Deoxyhypusine hydroxylase.